We begin with the raw amino-acid sequence, 429 residues long: D-amino acid dehydrogenase (429 aa).

3 to 17 contacts FAD; the sequence is VLILGSGVIGVTSAW.

It belongs to the DadA oxidoreductase family. The cofactor is FAD.

It catalyses the reaction a D-alpha-amino acid + A + H2O = a 2-oxocarboxylate + AH2 + NH4(+). Its function is as follows. Oxidative deamination of D-amino acids. This Xanthomonas axonopodis pv. citri (strain 306) protein is D-amino acid dehydrogenase.